A 312-amino-acid chain; its full sequence is uncharacterized protein (312 aa).

Active-site charge relay system residues include Ser-200, Asp-261, and His-292.

This sequence belongs to the AB hydrolase superfamily. AB hydrolase 2 family.

This is an uncharacterized protein from Acanthamoeba polyphaga mimivirus (APMV).